Consider the following 258-residue polypeptide: MNFSLEGRNIVVMGVANKRSIAWGIARSLHEAGARLIFTYAGERLEKSVHELAGTLDRNDSIILPCDVTNDAEIETCFASIKEQVGVIHGIAHCIAFANKEELVGEYLNTNRDGFLLAHNISSYSLTAVVKAARPMMTEGGSIVTLTYLGGELVMPNYNVMGVAKASLDASVKYLAADLGKENIRVNSISAGPIRTLSAKGISDFNSILKDIEERAPLRRTTTPEEVGDTAAFLFSDMSRGITGENLHVDSGFHITAR.

NAD(+)-binding positions include Gly-14, 20–21 (SI), 67–68 (DV), and Ile-95. Ala-98 serves as a coordination point for substrate. Active-site proton acceptor residues include Tyr-148 and Tyr-158. NAD(+)-binding positions include Lys-165 and 194-198 (IRTLS).

It belongs to the short-chain dehydrogenases/reductases (SDR) family. FabI subfamily. As to quaternary structure, homotetramer.

It carries out the reaction a 2,3-saturated acyl-[ACP] + NAD(+) = a (2E)-enoyl-[ACP] + NADH + H(+). The enzyme catalyses (2E)-butenoyl-[ACP] + NADH + H(+) = butanoyl-[ACP] + NAD(+). It functions in the pathway lipid metabolism; fatty acid biosynthesis. Its activity is regulated as follows. Inhibited by triclosan and acrylamide. In terms of biological role, catalyzes the reduction of a carbon-carbon double bond in an enoyl moiety that is covalently linked to an acyl carrier protein (ACP). Involved in the elongation cycle of fatty acid which are used in the lipid metabolism. This is Enoyl-[acyl-carrier-protein] reductase [NADH] FabI (fabI) from Bacillus subtilis (strain 168).